We begin with the raw amino-acid sequence, 66 residues long: Small ribosomal subunit protein bS21 (66 aa).

This sequence belongs to the bacterial ribosomal protein bS21 family.

The chain is Small ribosomal subunit protein bS21 from Rickettsia akari (strain Hartford).